The primary structure comprises 219 residues: tRNA (guanine-N(7)-)-methyltransferase (219 aa).

S-adenosyl-L-methionine is bound by residues E43, D68, E101, and N124. Substrate contacts are provided by K128 and D160.

Belongs to the class I-like SAM-binding methyltransferase superfamily. TrmB family.

It catalyses the reaction guanosine(46) in tRNA + S-adenosyl-L-methionine = N(7)-methylguanosine(46) in tRNA + S-adenosyl-L-homocysteine. The protein operates within tRNA modification; N(7)-methylguanine-tRNA biosynthesis. Its function is as follows. Catalyzes the formation of N(7)-methylguanine at position 46 (m7G46) in tRNA. The chain is tRNA (guanine-N(7)-)-methyltransferase from Clostridium beijerinckii (strain ATCC 51743 / NCIMB 8052) (Clostridium acetobutylicum).